We begin with the raw amino-acid sequence, 111 residues long: Large ribosomal subunit protein uL23 (111 aa).

It belongs to the universal ribosomal protein uL23 family. Part of the 50S ribosomal subunit. Contacts protein L29, and trigger factor when it is bound to the ribosome.

One of the early assembly proteins it binds 23S rRNA. One of the proteins that surrounds the polypeptide exit tunnel on the outside of the ribosome. Forms the main docking site for trigger factor binding to the ribosome. This Chlamydia caviae (strain ATCC VR-813 / DSM 19441 / 03DC25 / GPIC) (Chlamydophila caviae) protein is Large ribosomal subunit protein uL23.